A 1003-amino-acid polypeptide reads, in one-letter code: Methyl-CpG-binding domain protein 6 (1003 aa).

Residues 11 to 81 (DRAGGPVATS…KVFNFDPLAP (71 aa)) form the MBD domain. Residues 57–68 (DGTCKCGLECPL) are required for interaction with ASXL1/2/3. Disordered regions lie at residues 120–219 (TCSH…PPPA), 238–664 (VPSD…PLLF), and 683–1003 (ATLD…KLAP). Pro residues-rich tracts occupy residues 140 to 155 (PGPPSARPPCRVPPTT) and 268 to 287 (TPPPLPPSNNLPAHPGPASQ). 3 stretches are compositionally biased toward low complexity: residues 297-308 (LPLVLGPLGGAP), 319-328 (LASSLLSAAA), and 348-361 (AQAPSASHSSSLRP). The span at 391–407 (APAPVPQPFSLPEPSQP) shows a compositional bias: pro residues. Positions 408 to 426 (ILPSVLSLLGLPTPGPSHS) are enriched in low complexity. Residues 439 to 456 (LPPPPTLSSGSPPQPRHP) show a composition bias toward pro residues. Low complexity-rich tracts occupy residues 460 to 498 (SLPGTTSGSLSSVPGAPAPPAASKAPVVPSPVLQSPSEG) and 531 to 548 (GAGFPGMLGALPLPLSLG). A compositionally biased stretch (pro residues) spans 570–589 (QPPPEPLLPPPGGPGPPLAP). Positions 590–602 (GEPEGPSLLVASL) are enriched in low complexity. A compositionally biased stretch (pro residues) spans 603–617 (LPPPPSDLLPPPSAP). A compositionally biased stretch (low complexity) spans 618-633 (PSNLLASFLPLLALGP). Residues 635–649 (AGDGEGSAEGAGGPS) are compositionally biased toward gly residues. Low complexity predominate over residues 650–662 (GEPFSGLGDLSPL). A compositionally biased stretch (polar residues) spans 707-718 (TSSVTTATTDPG). 3 stretches are compositionally biased toward low complexity: residues 732–761 (PPQLLSPLLGASLLGDLSSLTSSPGALPSL), 768–778 (LLSGQLGLQLL), and 788–798 (SEASSPLACLL). Over residues 805–817 (PEQPEAPCLPPES) the composition is skewed to pro residues. The segment covering 818 to 837 (PASALEPEPARPPLSALAPP) has biased composition (low complexity). Basic residues predominate over residues 947–958 (RKSRRGRRRKYN). Residues 959-969 (PTRNSNSSRQD) show a composition bias toward polar residues. Residues 989 to 1003 (RPGRPAKNKRRKLAP) are compositionally biased toward basic residues.

In terms of assembly, core component of the polycomb repressive deubiquitinase (PR-DUB) complex, at least composed of BAP1, one of ASXL1, ASXL2 or (probably) ASXL3, and one of MBD5 or MBD6. Distinct combinations of ASXL and MBD proteins may preferentially bind specific histone modification marks. The PR-DUB core associates with a number of accessory proteins, including FOXK1, FOXK2, KDM1B, HCFC1 and OGT; KDM1B specifically associates with ASXL2 PR-DUB complexes. Interacts (via MBD domain) with ASXL1, ASXL2 and ASXL3 (via PHD domain); the interaction is probably direct, mediates association with other PR-DUB complex core components.

The protein resides in the nucleus. Its subcellular location is the chromosome. Its function is as follows. Non-catalytic component of the polycomb repressive deubiquitinase (PR-DUB) complex, a complex that specifically mediates deubiquitination of histone H2A monoubiquitinated at 'Lys-120' (H2AK119ub1). Important for stability of PR-DUB components and stimulating its ubiquitinase activity. As part of the PR-DUB complex, associates with chromatin enriched in histone marks H3K4me1, H3K4me3, and H3K27Ac, but not in H3K27me3. MBD5 and MBD6 containing complexes associate with distinct chromatin regions enriched in genes involved in different pathways. Heterochromatin recruitment is not mediated by DNA methylation. The PR-DUB complex is an epigenetic regulator of gene expression, including genes involved in development, cell communication, signaling, cell proliferation and cell viability; may promote cancer cell growth. In Homo sapiens (Human), this protein is Methyl-CpG-binding domain protein 6 (MBD6).